A 350-amino-acid chain; its full sequence is Biotin synthase (350 aa).

The 219-residue stretch at 38–256 (NHVQVSTLLS…IAVARIMMPE (219 aa)) folds into the Radical SAM core domain. [4Fe-4S] cluster is bound by residues cysteine 53, cysteine 57, and cysteine 60. Positions 97, 128, 188, and 260 each coordinate [2Fe-2S] cluster.

This sequence belongs to the radical SAM superfamily. Biotin synthase family. In terms of assembly, homodimer. [4Fe-4S] cluster is required as a cofactor. Requires [2Fe-2S] cluster as cofactor.

The catalysed reaction is (4R,5S)-dethiobiotin + (sulfur carrier)-SH + 2 reduced [2Fe-2S]-[ferredoxin] + 2 S-adenosyl-L-methionine = (sulfur carrier)-H + biotin + 2 5'-deoxyadenosine + 2 L-methionine + 2 oxidized [2Fe-2S]-[ferredoxin]. It functions in the pathway cofactor biosynthesis; biotin biosynthesis; biotin from 7,8-diaminononanoate: step 2/2. Functionally, catalyzes the conversion of dethiobiotin (DTB) to biotin by the insertion of a sulfur atom into dethiobiotin via a radical-based mechanism. The chain is Biotin synthase from Aliivibrio fischeri (strain MJ11) (Vibrio fischeri).